The following is a 341-amino-acid chain: Methionine import ATP-binding protein MetN 3 (341 aa).

The 240-residue stretch at 2–241 (ILLENVKKIY…PQQDITKRFV (240 aa)) folds into the ABC transporter domain. ATP is bound at residue 38–45 (GYSGAGKS).

Belongs to the ABC transporter superfamily. Methionine importer (TC 3.A.1.24) family. The complex is composed of two ATP-binding proteins (MetN), two transmembrane proteins (MetI) and a solute-binding protein (MetQ).

It localises to the cell membrane. It carries out the reaction L-methionine(out) + ATP + H2O = L-methionine(in) + ADP + phosphate + H(+). The enzyme catalyses D-methionine(out) + ATP + H2O = D-methionine(in) + ADP + phosphate + H(+). Part of the ABC transporter complex MetNIQ involved in methionine import. Responsible for energy coupling to the transport system. The chain is Methionine import ATP-binding protein MetN 3 from Bacillus cereus (strain ZK / E33L).